The following is a 341-amino-acid chain: 1-aminocyclopropane-1-carboxylate deaminase (341 aa).

Position 1 is an N-acetylserine (serine 1). N6-(pyridoxal phosphate)lysine is present on lysine 51. Serine 78 (nucleophile) is an active-site residue.

It belongs to the ACC deaminase/D-cysteine desulfhydrase family. Homodimer. It depends on pyridoxal 5'-phosphate as a cofactor.

It carries out the reaction 1-aminocyclopropane-1-carboxylate + H2O = 2-oxobutanoate + NH4(+). Its function is as follows. Catalyzes a cyclopropane ring-opening reaction, the irreversible conversion of 1-aminocyclopropane-1-carboxylate (ACC) to ammonia and alpha-ketobutyrate. The sequence is that of 1-aminocyclopropane-1-carboxylate deaminase from Cyberlindnera saturnus (Yeast).